The primary structure comprises 382 residues: Na(+)/H(+) antiporter NhaA 2 (382 aa).

The next 10 membrane-spanning stretches (helical) occupy residues 11 to 31, 45 to 65, 91 to 111, 116 to 136, 145 to 165, 171 to 191, 197 to 214, 287 to 307, 324 to 344, and 353 to 373; these read FSVP…LDPA, LSFH…IAAV, LGGV…VGLP, GWGI…RMVF, YLLL…ALFY, PVVA…WGLG, SYWP…IGLH, WLVL…FGLL, LLVA…VSGS, and AAAK…MLLG.

It belongs to the NhaA Na(+)/H(+) (TC 2.A.33) antiporter family.

The protein resides in the cell inner membrane. It carries out the reaction Na(+)(in) + 2 H(+)(out) = Na(+)(out) + 2 H(+)(in). Na(+)/H(+) antiporter that extrudes sodium in exchange for external protons. This is Na(+)/H(+) antiporter NhaA 2 from Pelobacter propionicus (strain DSM 2379 / NBRC 103807 / OttBd1).